Reading from the N-terminus, the 1116-residue chain is MAADIGSQSSGSLEERFEQSLHLQNVDKQDWSLNSVLQFLKLYKFNKEWEDVFIKSRIEMDLFINLADQSKAEEFAFKNKLSKESAIQLSSCIRKTLLAPSSTRVPSKNSSYETLTYSAKDSSDDVFTETNSGFRSSNQNSSLKSFQSVPDSNVNVFGGFGGSVVDNNELLSTGKNSHQTTSLNLEGSPINLHAYKGTVTSIINDDSRNINKKTLSKQPVSEHKEKQTSFLRRFRVPGFSRDKDKTKDCPSSNSNPFHLASSNVKTLDASLDQGEWVPRIHRLESQIGLISKKKSFVLATMDDMKFTVVDITNVQNATQLRKLIAKSMYLDISIDQFDLFLTEVGGAQYIEILDDRKLDIARLYSDEFGTIKFFVKPSQNEESGMDSDTYLSFGTKSSSTYKADDDSIYHRKEDFKKQPSYPVLTSDFEITDAGPNLSLSGHQPDNKYYKGFSSAPNLAVVPELPSRRFRGFEKIRGAKGEMATKILDATEAQSEKNKFTVCRPHKKVTLKMPLNSGSSAPQSPSSNTSASVLTRNFVAHRDPPPPPTETSSLRRKNTLTRRPSIRHARSSPYIDTGHNEASKFSHTSFDPKASSKSSNSLKESVEALSEIPFEDAPALDESDLSGDPFWAIQPKQSSSQVPKENHHNIQSKLSINTEAATDLKANELSSPKTPEYCRGDDRSISLSPLSYRLRKSKHIRESPPSSKVINSGNWEVRPSADDLYEDVDRFFPRYDLDKVLVVDQSRMVSSPSKVSIRPKMKSVRLLAREASEARKEIRHNARRNKSGNLLRRSSTKLWGSRIVELKPDTTITSGSVVSQNATFKWMKGELIGNGTYGKVFLAMNINTGELIAVKQVEIPQTINGRHDQLRKDIVDSINAEISMIADLDHLNIVQYLGFEKTETDISIFLEYVSGGSIGRCLRNYGPFEEQLVRFVSRQVLYGLSYLHSKGIIHRDLKADNLLIDFDGVCKISDFGISKHSDNVYDNDANLSMQGSIFWMAPEVIHNDHQGYSAKVDVWSLGCVVLEMLAGRRPWSTDEAIQAMFKLGTEKKAPPIPSELVSQVSPEAIQFLNACFTVNADVRPTAEELLNHPFMKCDEEFNFKDTNLYDMLCKRKS.

2 disordered regions span residues 510–601 and 618–647; these read LKMP…SNSL and ALDE…ENHH. The segment covering 515–531 has biased composition (low complexity); that stretch reads NSGSSAPQSPSSNTSAS. The span at 553–569 shows a compositional bias: basic residues; the sequence is LRRKNTLTRRPSIRHAR. A compositionally biased stretch (low complexity) spans 588 to 601; that stretch reads SFDPKASSKSSNSL. The segment covering 634-647 has biased composition (polar residues); sequence PKQSSSQVPKENHH. Residues 825–1094 enclose the Protein kinase domain; the sequence is WMKGELIGNG…AEELLNHPFM (270 aa). Residues 831 to 839 and Lys854 contribute to the ATP site; that span reads IGNGTYGKV. The Proton acceptor role is filled by Asp955.

The protein belongs to the protein kinase superfamily. STE Ser/Thr protein kinase family. MAP kinase kinase kinase subfamily.

The catalysed reaction is L-seryl-[protein] + ATP = O-phospho-L-seryl-[protein] + ADP + H(+). The enzyme catalyses L-threonyl-[protein] + ATP = O-phospho-L-threonyl-[protein] + ADP + H(+). May regulate cell morphology, cell wall integrity, salt resistance, cell cycle reentry from stationary-phase arrest, and filamentous growth in response to stress. Activates the MAP kinase kinase skh1/pek1 by phosphorylation. The chain is MAP kinase kinase kinase mkh1 (mkh1) from Schizosaccharomyces pombe (strain 972 / ATCC 24843) (Fission yeast).